Here is a 171-residue protein sequence, read N- to C-terminus: Transcription antitermination protein NusB (171 aa).

Belongs to the NusB family.

Involved in transcription antitermination. Required for transcription of ribosomal RNA (rRNA) genes. Binds specifically to the boxA antiterminator sequence of the ribosomal RNA (rrn) operons. The protein is Transcription antitermination protein NusB of Brucella abortus (strain S19).